The following is a 490-amino-acid chain: 4-hydroxyphenylacetaldehyde synthase (490 aa).

Pro97, His198, and His313 together coordinate L-phenylalanine. N6-(pyridoxal phosphate)lysine is present on Lys314. Residue Phe343 coordinates L-phenylalanine.

Belongs to the group II decarboxylase family. In terms of assembly, homodimer. The cofactor is pyridoxal 5'-phosphate.

It catalyses the reaction L-tyrosine + O2 + H2O + H(+) = (4-hydroxyphenyl)acetaldehyde + H2O2 + NH4(+) + CO2. Its function is as follows. Catalyzes the production of 4-hydroxyphenylacetaldehyde (HPAA) directly from L-tyrosine, tyramine not being formed as an intermediate. The protein is 4-hydroxyphenylacetaldehyde synthase of Rhodiola rosea (Roseroot).